The following is a 226-amino-acid chain: V-type proton ATPase subunit E 1 (226 aa).

Alanine 2 is subject to N-acetylalanine. The residue at position 56 (tyrosine 56) is a Phosphotyrosine.

Belongs to the V-ATPase E subunit family. As to quaternary structure, V-ATPase is a heteromultimeric enzyme made up of two complexes: the ATP-hydrolytic V1 complex and the proton translocation V0 complex. The V1 complex consists of three catalytic AB heterodimers that form a heterohexamer, three peripheral stalks each consisting of EG heterodimers, one central rotor including subunits D and F, and the regulatory subunits C and H. The proton translocation complex V0 consists of the proton transport subunit a, a ring of proteolipid subunits c9c'', rotary subunit d, subunits e and f, and the accessory subunits ATP6AP1/Ac45 and ATP6AP2/PRR. Interacts with RABL2/RABL2A; binds preferentially to GTP-bound RABL2. Interacts with ALDOC. Interacts with RAB11B. Expressed in brain (at protein level).

It is found in the apical cell membrane. The protein resides in the cytoplasmic vesicle. The protein localises to the secretory vesicle. It localises to the synaptic vesicle membrane. Its subcellular location is the clathrin-coated vesicle membrane. Its function is as follows. Subunit of the V1 complex of vacuolar(H+)-ATPase (V-ATPase), a multisubunit enzyme composed of a peripheral complex (V1) that hydrolyzes ATP and a membrane integral complex (V0) that translocates protons. V-ATPase is responsible for acidifying and maintaining the pH of intracellular compartments and in some cell types, is targeted to the plasma membrane, where it is responsible for acidifying the extracellular environment. This Rattus norvegicus (Rat) protein is V-type proton ATPase subunit E 1 (Atp6v1e1).